The chain runs to 393 residues: Elongation factor Tu (393 aa).

The region spanning 10-203 is the tr-type G domain; sequence KPHVNIGTIG…AVDNYIPTPV (194 aa). A G1 region spans residues 19–26; that stretch reads GHVDHGKT. 19 to 26 serves as a coordination point for GTP; it reads GHVDHGKT. T26 contacts Mg(2+). The G2 stretch occupies residues 60 to 64; sequence GITIS. The interval 81–84 is G3; the sequence is DCPG. Residues 81 to 85 and 136 to 139 contribute to the GTP site; these read DCPGH and NKVD. A G4 region spans residues 136–139; it reads NKVD. The interval 173–175 is G5; sequence SAL.

The protein belongs to the TRAFAC class translation factor GTPase superfamily. Classic translation factor GTPase family. EF-Tu/EF-1A subfamily. Monomer.

The protein resides in the cytoplasm. The catalysed reaction is GTP + H2O = GDP + phosphate + H(+). Its function is as follows. GTP hydrolase that promotes the GTP-dependent binding of aminoacyl-tRNA to the A-site of ribosomes during protein biosynthesis. This chain is Elongation factor Tu, found in Chloroherpeton thalassium (strain ATCC 35110 / GB-78).